Reading from the N-terminus, the 176-residue chain is Transcriptional repressor MprA (176 aa).

An HTH marR-type domain is found at 26–160 (EILLTRLCMH…LEQITRKLLS (135 aa)).

In terms of biological role, negative regulator of the multidrug operon emrAB. The protein is Transcriptional repressor MprA (mprA) of Escherichia coli O157:H7.